The chain runs to 29 residues: uncharacterized protein (29 aa).

A helical transmembrane segment spans residues 7–27; the sequence is FSLVTTIIVLGLIVAVGLTAA.

The protein localises to the cell inner membrane. This is an uncharacterized protein from Escherichia coli O6:K15:H31 (strain 536 / UPEC).